We begin with the raw amino-acid sequence, 495 residues long: N-succinylglutamate 5-semialdehyde dehydrogenase (495 aa).

NAD(+) is bound at residue G220–G225. Catalysis depends on residues E243 and C277.

It belongs to the aldehyde dehydrogenase family. AstD subfamily.

The enzyme catalyses N-succinyl-L-glutamate 5-semialdehyde + NAD(+) + H2O = N-succinyl-L-glutamate + NADH + 2 H(+). It functions in the pathway amino-acid degradation; L-arginine degradation via AST pathway; L-glutamate and succinate from L-arginine: step 4/5. In terms of biological role, catalyzes the NAD-dependent reduction of succinylglutamate semialdehyde into succinylglutamate. This chain is N-succinylglutamate 5-semialdehyde dehydrogenase, found in Enterobacter sp. (strain 638).